Consider the following 192-residue polypeptide: FMN-dependent NADH:quinone oxidoreductase 1 (192 aa).

FMN-binding positions include serine 9 and 15–17 (SYS).

It belongs to the azoreductase type 1 family. As to quaternary structure, homodimer. It depends on FMN as a cofactor.

The catalysed reaction is 2 a quinone + NADH + H(+) = 2 a 1,4-benzosemiquinone + NAD(+). The enzyme catalyses N,N-dimethyl-1,4-phenylenediamine + anthranilate + 2 NAD(+) = 2-(4-dimethylaminophenyl)diazenylbenzoate + 2 NADH + 2 H(+). Its function is as follows. Quinone reductase that provides resistance to thiol-specific stress caused by electrophilic quinones. In terms of biological role, also exhibits azoreductase activity. Catalyzes the reductive cleavage of the azo bond in aromatic azo compounds to the corresponding amines. This chain is FMN-dependent NADH:quinone oxidoreductase 1, found in Colwellia psychrerythraea (strain 34H / ATCC BAA-681) (Vibrio psychroerythus).